Consider the following 196-residue polypeptide: FAD-linked sulfhydryl oxidase ERV2 (196 aa).

Residues M1 to R12 lie on the Cytoplasmic side of the membrane. A helical; Signal-anchor membrane pass occupies residues I13–T35. Residues P36–G196 lie on the Lumenal side of the membrane. Residues M72–Y174 form the ERV/ALR sulfhydryl oxidase domain. 3 residues coordinate FAD: K78, R83, and W86. C121 and C124 are disulfide-bonded. Residues H127, C150, H153, N157, K162, and Y174 each contribute to the FAD site. A disulfide bridge connects residues C150 and C167. The cysteines at positions 176 and 178 are disulfide-linked.

As to quaternary structure, homodimer. Interacts with the substrate protein PDI1, forming transient intermolecular disulfide bridges. FAD is required as a cofactor.

Its subcellular location is the endoplasmic reticulum membrane. It catalyses the reaction 2 R'C(R)SH + O2 = R'C(R)S-S(R)CR' + H2O2. Its function is as follows. FAD-dependent sulfhydryl oxidase that catalyzes disulfide bond formation in the endoplasmic reticulum lumen in parallel to ERO1. The chain is FAD-linked sulfhydryl oxidase ERV2 (ERV2) from Saccharomyces cerevisiae (strain ATCC 204508 / S288c) (Baker's yeast).